The primary structure comprises 889 residues: Voltage-gated potassium channel KCNC3 (889 aa).

Positions 1–80 are important for normal N-type inactivation; the sequence is MLSSVCVWSF…CSGLPAVAMG (80 aa). Residues 1–291 are Cytoplasmic-facing; it reads MLSSVCVWSF…EDPYSSRAAR (291 aa). Residues 10–66 are disordered; sequence FSGRQGTRKQHSQPAPTPQPPESSPPPLLPPPQQQCAQPGTAASPAGAPLSCGPGGR. A compositionally biased stretch (pro residues) spans 24 to 42; that stretch reads APTPQPPESSPPPLLPPPQ. Residues His-159, Cys-165, Cys-186, and Cys-187 each coordinate Zn(2+). The segment at 202–231 is disordered; sequence DSFEAPDSSGNANANAGGAHDAGLDDEAGA. The segment covering 211 to 222 has biased composition (low complexity); that stretch reads GNANANAGGAHD. Residues 292 to 310 traverse the membrane as a helical segment; the sequence is YVAFASLFFILISITTFCL. Asn-321 carries N-linked (GlcNAc...) asparagine glycosylation. Residues 352–371 traverse the membrane as a helical segment; it reads VEGVCVVWFTFEFLMRVTFC. At 372-380 the chain is on the cytoplasmic side; sequence PDKVEFLKS. A helical transmembrane segment spans residues 381 to 399; it reads SLNIIDCVAILPFYLEVGL. The chain crosses the membrane as a helical; Voltage-sensor span at residues 413-435; sequence FLRVVRFVRILRIFKLTRHFVGL. Over 436-448 the chain is Cytoplasmic; sequence RVLGHTLRASTNE. A helical membrane pass occupies residues 449–470; the sequence is FLLLIIFLALGVLIFATMIYYA. The K(+) site is built by Thr-504, Leu-505, Gly-506, and Tyr-507. The short motif at 504-509 is the Selectivity filter element; that stretch reads TLGYGD. Residues 519–540 traverse the membrane as a helical segment; that stretch reads LVGALCALAGVLTIAMPVPVIV. Topologically, residues 541 to 889 are cytoplasmic; sequence NNFGMYYSLA…FPSRHSSPAV (349 aa). 3 disordered regions span residues 557 to 627, 691 to 834, and 852 to 889; these read PKKK…LLRG, IDQP…PQSL, and TLGF…SPAV. Arg-626 carries the omega-N-methylarginine modification. 2 positions are modified to phosphoserine: Ser-697 and Ser-702. Positions 748 to 764 are enriched in low complexity; it reads SQAPPASCPTSTPTQQP. Residue Thr-759 is modified to Phosphothreonine. Positions 794–808 are enriched in basic residues; it reads HRSHQPPGKHQRGGR.

Belongs to the potassium channel family. C (Shaw) (TC 1.A.1.2) subfamily. Kv3.3/KCNC3 sub-subfamily. Homotetramer. Heterotetramer with KCNC1. Interacts (via C-terminus) with HAX1; this interaction modulates channel gating. Identified in a complex with ACTR3, a subunit of the Arp2/3 complex; this interaction is indirect and depends on the presence of HAX1. In terms of processing, N-glycosylated. Detected on Purkinje cells in the cerebellum molecular layer (at protein level).

The protein resides in the cell membrane. The protein localises to the presynaptic cell membrane. It is found in the perikaryon. It localises to the cell projection. Its subcellular location is the axon. The protein resides in the dendrite. The protein localises to the dendritic spine membrane. It is found in the cytoplasm. It localises to the cell cortex. Its subcellular location is the cytoskeleton. It catalyses the reaction K(+)(in) = K(+)(out). In terms of biological role, voltage-gated potassium channel that plays an important role in the rapid repolarization of fast-firing brain neurons. The channel opens in response to the voltage difference across the membrane, forming a potassium-selective channel through which potassium ions pass in accordance with their electrochemical gradient. The channel displays rapid activation and inactivation kinetics. It plays a role in the regulation of the frequency, shape and duration of action potentials in Purkinje cells. Required for normal survival of cerebellar neurons, probably via its role in regulating the duration and frequency of action potentials that in turn regulate the activity of voltage-gated Ca(2+) channels and cellular Ca(2+) homeostasis. Required for normal motor function. Plays a role in the reorganization of the cortical actin cytoskeleton and the formation of actin veil structures in neuronal growth cones via its interaction with HAX1 and the Arp2/3 complex. This chain is Voltage-gated potassium channel KCNC3, found in Rattus norvegicus (Rat).